The sequence spans 380 residues: Cytochrome b (380 aa).

4 helical membrane passes run 33-53 (FGSLLGLCLIVQILTGLFLAM), 77-98 (WLIRYMHANGASMFFICLFLHV), 113-133 (WNMGIVLLFAVMATAFMGYVL), and 178-198 (FFAFHFILPFIITALVLVHLL). H83 and H97 together coordinate heme. Heme contacts are provided by H182 and H196. Residue H201 participates in a ubiquinone binding. 4 helical membrane passes run 226 to 246 (VKDFLGVLILLMAFMILTLFF), 288 to 308 (LGGVLALILSIVILAFMPLLH), 320 to 340 (ITQTMYWILVADLLVLTWIGG), and 347 to 367 (FIIIGQTASIAYFTIIVIFMP).

It belongs to the cytochrome b family. In terms of assembly, the cytochrome bc1 complex contains 11 subunits: 3 respiratory subunits (MT-CYB, CYC1 and UQCRFS1), 2 core proteins (UQCRC1 and UQCRC2) and 6 low-molecular weight proteins (UQCRH/QCR6, UQCRB/QCR7, UQCRQ/QCR8, UQCR10/QCR9, UQCR11/QCR10 and a cleavage product of UQCRFS1). This cytochrome bc1 complex then forms a dimer. Requires heme as cofactor.

The protein localises to the mitochondrion inner membrane. Its function is as follows. Component of the ubiquinol-cytochrome c reductase complex (complex III or cytochrome b-c1 complex) that is part of the mitochondrial respiratory chain. The b-c1 complex mediates electron transfer from ubiquinol to cytochrome c. Contributes to the generation of a proton gradient across the mitochondrial membrane that is then used for ATP synthesis. This is Cytochrome b (MT-CYB) from Microtus arvalis (Common vole).